The sequence spans 162 residues: Transcription elongation factor GreA (162 aa).

A coiled-coil region spans residues 44–72; that stretch reads ENAEYHAAKEKQSHIERRIAELSDILSRA.

This sequence belongs to the GreA/GreB family.

Necessary for efficient RNA polymerase transcription elongation past template-encoded arresting sites. The arresting sites in DNA have the property of trapping a certain fraction of elongating RNA polymerases that pass through, resulting in locked ternary complexes. Cleavage of the nascent transcript by cleavage factors such as GreA or GreB allows the resumption of elongation from the new 3'terminus. GreA releases sequences of 2 to 3 nucleotides. This Nautilia profundicola (strain ATCC BAA-1463 / DSM 18972 / AmH) protein is Transcription elongation factor GreA.